The following is a 288-amino-acid chain: Plasmodesmata-located protein 6 (288 aa).

An N-terminal signal peptide occupies residues 1–22; the sequence is MFATKTVLFIAVVSLLGTFSSA. Residues 23–256 are Extracellular-facing; sequence AVDTFIYGGC…NNDDDEIEKT (234 aa). Gnk2-homologous domains are found at residues 25–132 and 137–234; these read DTFI…NTTF and DKTV…ARGG. Disulfide bonds link Cys-32-Cys-110, Cys-84-Cys-95, Cys-98-Cys-123, Cys-145-Cys-212, Cys-188-Cys-197, and Cys-200-Cys-225. The chain crosses the membrane as a helical span at residues 257 to 277; sequence LAIIVGLIAGVTLLVVFLSFM. A necessary and sufficient for plasmodesmal targeting region spans residues 257–277; it reads LAIIVGLIAGVTLLVVFLSFM. At 278–288 the chain is on the cytoplasmic side; that stretch reads AKSCERGKGGK.

This sequence belongs to the cysteine-rich repeat secretory protein family. Plasmodesmata-located proteins (PDLD) subfamily. As to quaternary structure, (Microbial infection) Interacts with Grapevine fanleaf virus (GFLV) 2B-MP. In terms of tissue distribution, highly expressed in inflorescence silique (at mRNA level).

The protein resides in the cell membrane. The protein localises to the cell junction. It localises to the plasmodesma. Modulates cell-to-cell trafficking. The protein is Plasmodesmata-located protein 6 of Arabidopsis thaliana (Mouse-ear cress).